The chain runs to 229 residues: UPF0758 protein CLH_0547 (229 aa).

One can recognise an MPN domain in the interval 107-229 (KIMSPNDIAM…FISLKEKGFI (123 aa)). 3 residues coordinate Zn(2+): H178, H180, and D191. Positions 178 to 191 (HNHPSGDPTPSKED) match the JAMM motif motif.

Belongs to the UPF0758 family.

The chain is UPF0758 protein CLH_0547 from Clostridium botulinum (strain Alaska E43 / Type E3).